Here is a 185-residue protein sequence, read N- to C-terminus: Ribosome-recycling factor (185 aa).

Belongs to the RRF family.

It localises to the cytoplasm. Functionally, responsible for the release of ribosomes from messenger RNA at the termination of protein biosynthesis. May increase the efficiency of translation by recycling ribosomes from one round of translation to another. The polypeptide is Ribosome-recycling factor (Coxiella burnetii (strain RSA 493 / Nine Mile phase I)).